Here is a 209-residue protein sequence, read N- to C-terminus: CAAX box protein 1 (209 aa).

The interval 182–209 (TAGRPPRDLSPSARPISSPPPETSCVLA) is disordered. Cys206 bears the Cysteine methyl ester mark. Cys206 carries S-farnesyl cysteine lipidation. A propeptide spans 207-209 (VLA) (removed in mature form).

Ubiquitous.

The protein localises to the cell membrane. This chain is CAAX box protein 1, found in Homo sapiens (Human).